The primary structure comprises 311 residues: Urease accessory protein UreD (311 aa).

The protein belongs to the UreD family. As to quaternary structure, ureD, UreF and UreG form a complex that acts as a GTP-hydrolysis-dependent molecular chaperone, activating the urease apoprotein by helping to assemble the nickel containing metallocenter of UreC. The UreE protein probably delivers the nickel.

The protein localises to the cytoplasm. In terms of biological role, required for maturation of urease via the functional incorporation of the urease nickel metallocenter. The chain is Urease accessory protein UreD from Synechococcus sp. (strain CC9902).